The chain runs to 498 residues: MSSDIDELRREIDIVDVISEYLNLEKVGSNYRTNCPFHPDDTPSFYVSPSKQIFKCFGCGVGGDAIKFVSLYEDISYFEAALELAKRYGKKLDLEKISKDEKVYVALDRVCDFYRESLLKNREASEYVKSRGIDPKVARKFDLGYAPSSEALVKVLKENDLLEAYLETKNLLSPTKGVYRDLFLRRVVIPIKDPRGRVIGFGGRRIVEDKSPKYINSPDSRVFKKGENLFGLYEAKEYIKEEGFAILVEGYFDLLRLFSEGIRNVVAPLGTALTQNQANLLSKFTKKVYILYDGDDAGRKAMKSAIPLLLSAGVEVYPVYLPEGYDPDEFIKEFGKEELRRLINSSGELFETLIKTARENLEEKTREFRYYLGFISDGVRRFALASEFHTKYKVPMEILLMKIEKNSQEKEIKLSFKEKIFLKGLIELKPKIDLEVLNLSPELKELAVNALNGEEHLLPKEVLEYQVDNLEKLFNNILRDLQKSGKKRKKRGLKNVNT.

The CHC2-type zinc-finger motif lies at 35–59; it reads CPFHPDDTPSFYVSPSKQIFKCFGC. The Toprim domain occupies 243 to 324; the sequence is GFAILVEGYF…EVYPVYLPEG (82 aa). Positions 249, 293, and 295 each coordinate Mg(2+).

This sequence belongs to the DnaG primase family. In terms of assembly, monomer. Interacts with DnaB. The cofactor is Zn(2+). Mg(2+) is required as a cofactor.

It carries out the reaction ssDNA + n NTP = ssDNA/pppN(pN)n-1 hybrid + (n-1) diphosphate.. In terms of biological role, RNA polymerase that catalyzes the synthesis of short RNA molecules used as primers for DNA polymerase during DNA replication. This Aquifex aeolicus (strain VF5) protein is DNA primase.